We begin with the raw amino-acid sequence, 271 residues long: Pyridoxine kinase (271 aa).

Asn-141 contacts ATP. Position 144 (Glu-144) interacts with Mg(2+). ATP-binding positions include 178-182 (TGGGK), Asp-190, Ile-206, Gly-215, and Lys-240.

It belongs to the ThiD family. Homodimer.

The enzyme catalyses pyridoxal + ATP = pyridoxal 5'-phosphate + ADP + H(+). In terms of biological role, phosphorylates B6 vitamers; functions in a salvage pathway. Uses pyridoxal, pyridoxine, and pyridoxamine as substrates. Can also use hydroxymethylpyrimidine (HMP) as substrate. In Bacillus subtilis (strain 168), this protein is Pyridoxine kinase (pdxK).